A 589-amino-acid chain; its full sequence is Sulfite reductase [NADPH] hemoprotein beta-component (589 aa).

Residues cysteine 443, cysteine 449, cysteine 488, and cysteine 492 each coordinate [4Fe-4S] cluster. Residue cysteine 492 participates in siroheme binding.

This sequence belongs to the nitrite and sulfite reductase 4Fe-4S domain family. In terms of assembly, alpha(8)-beta(8). The alpha component is a flavoprotein, the beta component is a hemoprotein. Siroheme serves as cofactor. The cofactor is [4Fe-4S] cluster.

It carries out the reaction hydrogen sulfide + 3 NADP(+) + 3 H2O = sulfite + 3 NADPH + 4 H(+). It participates in sulfur metabolism; hydrogen sulfide biosynthesis; hydrogen sulfide from sulfite (NADPH route): step 1/1. Functionally, component of the sulfite reductase complex that catalyzes the 6-electron reduction of sulfite to sulfide. This is one of several activities required for the biosynthesis of L-cysteine from sulfate. The sequence is that of Sulfite reductase [NADPH] hemoprotein beta-component from Neisseria meningitidis serogroup C (strain 053442).